We begin with the raw amino-acid sequence, 423 residues long: Replication factor C large subunit (423 aa).

63 to 70 (GPPGIGKT) contacts ATP.

This sequence belongs to the activator 1 small subunits family. RfcL subfamily. Heteromultimer composed of small subunits (RfcS) and large subunits (RfcL).

Part of the RFC clamp loader complex which loads the PCNA sliding clamp onto DNA. This Pyrobaculum islandicum (strain DSM 4184 / JCM 9189 / GEO3) protein is Replication factor C large subunit.